We begin with the raw amino-acid sequence, 165 residues long: Mediator of RNA polymerase II transcription subunit 10 (165 aa).

Disordered stretches follow at residues serine 54–leucine 81 and leucine 143–glycine 165. The segment covering threonine 62–asparagine 77 has biased composition (polar residues).

The protein belongs to the Mediator complex subunit 10 family. As to quaternary structure, component of the Mediator complex.

Its subcellular location is the nucleus. Component of the Mediator complex, a coactivator involved in the regulated transcription of nearly all RNA polymerase II-dependent genes. Mediator functions as a bridge to convey information from gene-specific regulatory proteins to the basal RNA polymerase II transcription machinery. Mediator is recruited to promoters by direct interactions with regulatory proteins and serves as a scaffold for the assembly of a functional preinitiation complex with RNA polymerase II and the general transcription factors. In Emericella nidulans (strain FGSC A4 / ATCC 38163 / CBS 112.46 / NRRL 194 / M139) (Aspergillus nidulans), this protein is Mediator of RNA polymerase II transcription subunit 10 (nut2).